Consider the following 73-residue polypeptide: Gastricsin (73 aa).

Positions 1-43 (SVIKVPLKKLKSIRQAMKEKGLLEEFLKTHKYDPAQRYRIGDI) are cleaved as a propeptide — activation peptide. The Peptidase A1 domain occupies 57–73 (YFGEISIGTPPQNFLVL).

Belongs to the peptidase A1 family.

The protein resides in the secreted. The enzyme catalyses More restricted specificity than pepsin A, but shows preferential cleavage at Tyr-|-Xaa bonds. High activity on hemoglobin.. In terms of biological role, hydrolyzes a variety of proteins. The protein is Gastricsin (PGC) of Sus scrofa (Pig).